The sequence spans 308 residues: Homeobox-leucine zipper protein HOX2 (308 aa).

2 disordered regions span residues 15–36 (QGSL…SSPW) and 71–117 (QGRA…RKKL). The span at 74–88 (ASTSPDSAAALSSAS) shows a compositional bias: low complexity. A DNA-binding region (homeobox) is located at residues 112-171 (GGRKKLRLSKDQAAVLEECFKTHSTLNPKQKVALANRLGLRPRQVEVWFQNRRARTKLKQ). A leucine-zipper region spans residues 170–214 (KQTEVDCEYLKRWCERLADENKRLEKELADLRALKAAPSPASASA).

This sequence belongs to the HD-ZIP homeobox family. Class II subfamily. As to quaternary structure, homodimer. May form a heterodimer with HOX1, HOX3 or HOX7. Expressed in seedlings, roots, leaves, nodes, internodes, flowers and embryo.

The protein localises to the nucleus. Probable transcription factor that binds to the DNA sequence 5'-CAAT[GC]ATTG-3'. In Oryza sativa subsp. indica (Rice), this protein is Homeobox-leucine zipper protein HOX2 (HOX2).